The sequence spans 473 residues: Photosystem II CP43 reaction center protein (473 aa).

Residues 1–14 (MKTLYSLRRFYPVE) constitute a propeptide that is removed on maturation. Thr15 carries the N-acetylthreonine modification. Thr15 carries the post-translational modification Phosphothreonine. 5 helical membrane-spanning segments follow: residues 69–93 (LFEVAHFVPEKPMYEQGLILLPHLA), 134–155 (LLGPETLEESFPFFGYVWKDRN), 178–200 (KALYFGGVYDTWAPGGGDVRKIT), 255–275 (KPFAWARRALVWSGEAYLSYS), and 291–312 (WFNNTAYPSEFYGPTGPEASQA). Glu367 contributes to the [CaMn4O5] cluster binding site. Residues 447–471 (RARAAAAGFEKGIDRDFEPVLSMTP) form a helical membrane-spanning segment.

Belongs to the PsbB/PsbC family. PsbC subfamily. PSII is composed of 1 copy each of membrane proteins PsbA, PsbB, PsbC, PsbD, PsbE, PsbF, PsbH, PsbI, PsbJ, PsbK, PsbL, PsbM, PsbT, PsbX, PsbY, PsbZ, Psb30/Ycf12, at least 3 peripheral proteins of the oxygen-evolving complex and a large number of cofactors. It forms dimeric complexes. Binds multiple chlorophylls and provides some of the ligands for the Ca-4Mn-5O cluster of the oxygen-evolving complex. It may also provide a ligand for a Cl- that is required for oxygen evolution. PSII binds additional chlorophylls, carotenoids and specific lipids. serves as cofactor.

The protein resides in the plastid. The protein localises to the chloroplast thylakoid membrane. Functionally, one of the components of the core complex of photosystem II (PSII). It binds chlorophyll and helps catalyze the primary light-induced photochemical processes of PSII. PSII is a light-driven water:plastoquinone oxidoreductase, using light energy to abstract electrons from H(2)O, generating O(2) and a proton gradient subsequently used for ATP formation. This is Photosystem II CP43 reaction center protein from Daucus carota (Wild carrot).